Here is a 122-residue protein sequence, read N- to C-terminus: Fluoride-specific ion channel FluC (122 aa).

A run of 4 helical transmembrane segments spans residues 1 to 21 (MYAF…RHYL), 35 to 55 (WAIL…SAYL), 67 to 87 (FLLT…LNLI), and 98 to 118 (FLNL…GFWL). Na(+) contacts are provided by Gly-74 and Thr-77.

This sequence belongs to the fluoride channel Fluc/FEX (TC 1.A.43) family.

It localises to the cell inner membrane. The catalysed reaction is fluoride(in) = fluoride(out). Its activity is regulated as follows. Na(+) is not transported, but it plays an essential structural role and its presence is essential for fluoride channel function. In terms of biological role, fluoride-specific ion channel. Important for reducing fluoride concentration in the cell, thus reducing its toxicity. This Dichelobacter nodosus (strain VCS1703A) protein is Fluoride-specific ion channel FluC.